The primary structure comprises 241 residues: Deoxynucleotide monophosphate kinase (241 aa).

Lys10 contributes to the dGMP binding site. The ATP site is built by Arg11, Gly13, Asp15, and Thr16. DGMP-binding residues include Ile36 and Lys37. A Mg(2+)-binding site is contributed by Tyr42. A dGMP-binding site is contributed by Arg68. Mg(2+) contacts are provided by Gln85 and Glu108. The dGMP site is built by Arg132, Gly139, Thr140, Val144, Trp152, Asp175, Arg177, Gln178, Glu181, and Thr208.

It belongs to the dNMP kinase family. In terms of assembly, homodimer. Mg(2+) serves as cofactor.

The enzyme catalyses dTMP + ATP = dTDP + ADP. The catalysed reaction is dGMP + ATP = dGDP + ADP. It catalyses the reaction 5-hydroxymethyl-dCMP + ATP = 5-hydroxymethyl-dCDP + ADP. Inhibited by pyridoxal 5'-phosphate and diethylpyrocarbonate. Allows the synthesis of deoxyribonucleoside triphosphates necessary for the rapid viral DNA replication. Phosphorylates dGMP, dTMP and 5-hydroxymethyl-dCMP (hmdCMP) while excluding dCMP and dAMP. The phosphorylation of 5-hydroxymethyl-dCMP represents the first step in the replacement of cytosine by hydroxymethylcytosine in new viral DNA genomes. This is Deoxynucleotide monophosphate kinase (1) from Enterobacteria phage T4 (Bacteriophage T4).